A 283-amino-acid polypeptide reads, in one-letter code: Putative S-adenosyl-L-methionine-dependent methyltransferase SCO7813 (283 aa).

S-adenosyl-L-methionine is bound by residues D121 and 150 to 151 (DL). The tract at residues 264–283 (MSTLPQHEDGPGGLISAVRR) is disordered.

This sequence belongs to the UPF0677 family.

Functionally, exhibits S-adenosyl-L-methionine-dependent methyltransferase activity. The polypeptide is Putative S-adenosyl-L-methionine-dependent methyltransferase SCO7813 (Streptomyces coelicolor (strain ATCC BAA-471 / A3(2) / M145)).